A 441-amino-acid chain; its full sequence is tRNA modification GTPase MnmE (441 aa).

Residues Arg-23, Glu-81, and Arg-121 each contribute to the (6S)-5-formyl-5,6,7,8-tetrahydrofolate site. A TrmE-type G domain is found at 219 to 366 (GFTVVLAGAP…LLDAIQAAAE (148 aa)). GTP contacts are provided by residues 229–234 (NSGKST), 248–254 (SDSPGTT), and 273–276 (DTAG). Residues Ser-233 and Thr-254 each contribute to the Mg(2+) site. (6S)-5-formyl-5,6,7,8-tetrahydrofolate is bound at residue Lys-441.

It belongs to the TRAFAC class TrmE-Era-EngA-EngB-Septin-like GTPase superfamily. TrmE GTPase family. In terms of assembly, homodimer. Heterotetramer of two MnmE and two MnmG subunits. K(+) serves as cofactor.

The protein localises to the cytoplasm. Functionally, exhibits a very high intrinsic GTPase hydrolysis rate. Involved in the addition of a carboxymethylaminomethyl (cmnm) group at the wobble position (U34) of certain tRNAs, forming tRNA-cmnm(5)s(2)U34. The sequence is that of tRNA modification GTPase MnmE from Methylobacterium radiotolerans (strain ATCC 27329 / DSM 1819 / JCM 2831 / NBRC 15690 / NCIMB 10815 / 0-1).